We begin with the raw amino-acid sequence, 75 residues long: Metallothionein-like protein 1 (75 aa).

It belongs to the metallothionein superfamily. Type 15 family.

Metallothioneins have a high content of cysteine residues that bind various heavy metals. The protein is Metallothionein-like protein 1 of Cicer arietinum (Chickpea).